We begin with the raw amino-acid sequence, 275 residues long: Elongation factor Ts (275 aa).

The tract at residues 76–79 (TDFV) is involved in Mg(2+) ion dislocation from EF-Tu.

It belongs to the EF-Ts family.

The protein resides in the cytoplasm. Its function is as follows. Associates with the EF-Tu.GDP complex and induces the exchange of GDP to GTP. It remains bound to the aminoacyl-tRNA.EF-Tu.GTP complex up to the GTP hydrolysis stage on the ribosome. This is Elongation factor Ts from Rhodococcus opacus (strain B4).